A 101-amino-acid chain; its full sequence is Small ribosomal subunit protein bS16 (101 aa).

The protein belongs to the bacterial ribosomal protein bS16 family.

The sequence is that of Small ribosomal subunit protein bS16 from Ureaplasma urealyticum serovar 10 (strain ATCC 33699 / Western).